We begin with the raw amino-acid sequence, 963 residues long: Protein bicaudal C homolog 1-A (963 aa).

The interval 1–48 (MAAQCESIGGDMNQSDPGSNSERSADSPVPGSEDDSPHDPEWREERFR) is disordered. The segment covering 12–22 (MNQSDPGSNSE) has biased composition (polar residues). The span at 35 to 48 (DSPHDPEWREERFR) shows a compositional bias: basic and acidic residues. KH domains are found at residues 128 to 195 (RVTL…RVRI) and 280 to 344 (PVST…RQYL). Residues 592-601 (EASRQSNNHS) show a composition bias toward polar residues. Disordered regions lie at residues 592–613 (EASRQSNNHSSAEEVNSKTDPE), 668–713 (ERLL…TSQS), and 767–834 (LRRA…NKSA). Basic and acidic residues-rich tracts occupy residues 602–612 (SAEEVNSKTDP) and 683–696 (VTDKKAPGSERAAE). Low complexity predominate over residues 784–797 (ENSSLSRSNSREQL). The span at 812 to 824 (IDSSQNDYSSSIG) shows a compositional bias: polar residues. The region spanning 862–925 (FKGSDLPELF…LLAISELNKN (64 aa)) is the SAM domain.

It belongs to the BicC family.

In terms of biological role, putative RNA-binding protein. May be involved in regulating gene expression during embryonic development. Seems to be involved in endoderm formation. Ectopic expression results in endoderm formation in the absence of mesoderm induction. In Xenopus laevis (African clawed frog), this protein is Protein bicaudal C homolog 1-A (bicc1-a).